The chain runs to 433 residues: ATP-dependent protease ATPase subunit HslU (433 aa).

ATP is bound by residues valine 18, 60-65 (GVGKTE), aspartate 246, glutamate 311, and arginine 383.

Belongs to the ClpX chaperone family. HslU subfamily. A double ring-shaped homohexamer of HslV is capped on each side by a ring-shaped HslU homohexamer. The assembly of the HslU/HslV complex is dependent on binding of ATP.

The protein localises to the cytoplasm. In terms of biological role, ATPase subunit of a proteasome-like degradation complex; this subunit has chaperone activity. The binding of ATP and its subsequent hydrolysis by HslU are essential for unfolding of protein substrates subsequently hydrolyzed by HslV. HslU recognizes the N-terminal part of its protein substrates and unfolds these before they are guided to HslV for hydrolysis. The sequence is that of ATP-dependent protease ATPase subunit HslU from Rhodopseudomonas palustris (strain TIE-1).